We begin with the raw amino-acid sequence, 383 residues long: Protein delta homolog 2 (383 aa).

The N-terminal stretch at 1 to 26 (MPSGCRCLHLVCLLCILGAPVKPARG) is a signal peptide. EGF-like domains follow at residues 27-58 (NDCS…LHCE), 62-89 (RMPG…KFCD), 91-129 (DEHI…RDCE), and 131-172 (KAGP…ARCE). Over 27–306 (NDCSSLCDLA…RQEAGLGEPS (280 aa)) the chain is Extracellular. 17 disulfide bridges follow: Cys-29–Cys-40, Cys-33–Cys-46, Cys-48–Cys-57, Cys-66–Cys-71, Cys-79–Cys-88, Cys-95–Cys-107, Cys-101–Cys-117, Cys-119–Cys-128, Cys-135–Cys-148, Cys-142–Cys-160, Cys-162–Cys-171, Cys-178–Cys-189, Cys-183–Cys-198, Cys-200–Cys-209, Cys-216–Cys-227, Cys-221–Cys-236, and Cys-238–Cys-247. Asn-157 is a glycosylation site (N-linked (GlcNAc...) asparagine). The EGF-like 5; calcium-binding domain occupies 174–210 (NVDDCLMRPCANGATCLDGINRFSCLCPEGFTGRFCT). One can recognise an EGF-like 6; calcium-binding domain in the interval 212–248 (NLDDCASRPCQRGARCRDRVHDFDCLCPSGYGGKTCE). Residues 307–327 (LVAVVVFGAVTAALVLSTVLL) traverse the membrane as a helical segment. At 328 to 383 (TLRAWRRGFCPPGPCCYPAPHYAPARQDQECQVSMLPTGLPLPPDLPPEPGKTTAL) the chain is on the cytoplasmic side. A disordered region spans residues 364-383 (PTGLPLPPDLPPEPGKTTAL). The span at 367–377 (LPLPPDLPPEP) shows a compositional bias: pro residues.

The protein localises to the membrane. In terms of biological role, regulates adipogenesis. The polypeptide is Protein delta homolog 2 (DLK2) (Bos taurus (Bovine)).